The chain runs to 460 residues: Trigger factor (460 aa).

The PPIase FKBP-type domain maps to 166-245 (DDFLTIDITA…VKAVKERELP (80 aa)). Positions 434 to 460 (AAEEAAAGEANEEADVVASDDPAAVKF) are disordered. The segment covering 449–460 (VVASDDPAAVKF) has biased composition (low complexity).

This sequence belongs to the FKBP-type PPIase family. Tig subfamily.

Its subcellular location is the cytoplasm. It carries out the reaction [protein]-peptidylproline (omega=180) = [protein]-peptidylproline (omega=0). Functionally, involved in protein export. Acts as a chaperone by maintaining the newly synthesized protein in an open conformation. Functions as a peptidyl-prolyl cis-trans isomerase. This chain is Trigger factor, found in Paenarthrobacter aurescens (strain TC1).